The sequence spans 573 residues: Sulfite reductase [NADPH] hemoprotein beta-component (573 aa).

Residues C438, C444, C483, and C487 each coordinate [4Fe-4S] cluster. C487 lines the siroheme pocket.

It belongs to the nitrite and sulfite reductase 4Fe-4S domain family. Alpha(8)-beta(8). The alpha component is a flavoprotein, the beta component is a hemoprotein. It depends on siroheme as a cofactor. [4Fe-4S] cluster is required as a cofactor.

The enzyme catalyses hydrogen sulfide + 3 NADP(+) + 3 H2O = sulfite + 3 NADPH + 4 H(+). It participates in sulfur metabolism; hydrogen sulfide biosynthesis; hydrogen sulfide from sulfite (NADPH route): step 1/1. Functionally, component of the sulfite reductase complex that catalyzes the 6-electron reduction of sulfite to sulfide. This is one of several activities required for the biosynthesis of L-cysteine from sulfate. The polypeptide is Sulfite reductase [NADPH] hemoprotein beta-component (Staphylococcus haemolyticus (strain JCSC1435)).